A 437-amino-acid polypeptide reads, in one-letter code: uncharacterized protein (437 aa).

A helical transmembrane segment spans residues 47–67; the sequence is LLIILIGFILLSSISAIQIDA.

It localises to the membrane. This is an uncharacterized protein from Methanocaldococcus jannaschii (strain ATCC 43067 / DSM 2661 / JAL-1 / JCM 10045 / NBRC 100440) (Methanococcus jannaschii).